Consider the following 330-residue polypeptide: Polyprenal reductase (330 aa).

The Cytoplasmic segment spans residues 1-16 (MAGWAGFELSALNPLR). Residues 17 to 37 (TLWLALAAAFLFALLLQLAPA) form a helical membrane-spanning segment. At 38-80 (RLLPSCALFQDLLRYGKTKQSGSRRPAVCRAFDVPKRYFSHFY) the chain is on the lumenal side. The helical transmembrane segment at 81-101 (VISVVWNGSLLWLLSQSLFLG) threads the bilayer. The Cytoplasmic segment spans residues 102-132 (APFPNWLSALLRTLGATQFQALEMESKASRM). A helical membrane pass occupies residues 133–153 (PAAELALSAFLVLVFLWVHSL). Residues 154–169 (RRLFECFYVSVFSNAA) are Lumenal-facing. A helical transmembrane segment spans residues 170-190 (IHVVQYCFGLVYYVLVGLTVL). Residues 191 to 206 (SQVPMDDKNVYVLGKN) lie on the Cytoplasmic side of the membrane. Residues 207–227 (LLIQARWFHILGMVMFFWSSA) traverse the membrane as a helical segment. Residues 228–277 (HQYKCHVILSNLRRNKKGVVIHCQHRIPFGDWFEYVSSANYLAELMIYIS) are Lumenal-facing. Residues 278 to 298 (MAVTFGLHNLTWWLVVTYVFS) form a helical membrane-spanning segment. At 299-330 (SQALSAFFNHKFYRSTFVSYPKHRKAFLPFLF) the chain is on the cytoplasmic side.

It belongs to the steroid 5-alpha reductase family. Polyprenal reductase subfamily.

It localises to the endoplasmic reticulum membrane. The enzyme catalyses a di-trans,poly-cis-dolichal + NADP(+) = a di-trans,poly-cis-polyprenal + NADPH + H(+). The catalysed reaction is a 3-oxo-5alpha-steroid + NADP(+) = a 3-oxo-Delta(4)-steroid + NADPH + H(+). It catalyses the reaction androst-4-ene-3,17-dione + NADPH + H(+) = 5alpha-androstan-3,17-dione + NADP(+). It carries out the reaction 17beta-hydroxy-5alpha-androstan-3-one + NADP(+) = testosterone + NADPH + H(+). It functions in the pathway protein modification; protein glycosylation. Its function is as follows. Plays a key role in early steps of protein N-linked glycosylation by being involved in the conversion of polyprenol into dolichol. Acts as a polyprenal reductase that mediates the reduction of polyprenal into dolichal in a NADP-dependent mechanism. Dolichols are required for the synthesis of dolichol-linked monosaccharides and the oligosaccharide precursor used for N-glycosylation. Also able to convert testosterone (T) into 5-alpha-dihydrotestosterone (DHT). This Mus musculus (Mouse) protein is Polyprenal reductase.